A 206-amino-acid chain; its full sequence is LexA repressor (206 aa).

A DNA-binding region (H-T-H motif) is located at residues 27-47 (YEEIRQNLGFRSLNAVFKHLK). Active-site for autocatalytic cleavage activity residues include Ser120 and Lys157.

It belongs to the peptidase S24 family. In terms of assembly, homodimer.

The enzyme catalyses Hydrolysis of Ala-|-Gly bond in repressor LexA.. In terms of biological role, represses a number of genes involved in the response to DNA damage (SOS response), including recA and lexA. In the presence of single-stranded DNA, RecA interacts with LexA causing an autocatalytic cleavage which disrupts the DNA-binding part of LexA, leading to derepression of the SOS regulon and eventually DNA repair. This is LexA repressor from Syntrophobacter fumaroxidans (strain DSM 10017 / MPOB).